Consider the following 164-residue polypeptide: RNA pyrophosphohydrolase (164 aa).

Residues P8 to R153 enclose the Nudix hydrolase domain. The Nudix box signature appears at G45–G66.

This sequence belongs to the Nudix hydrolase family. RppH subfamily. A divalent metal cation is required as a cofactor.

In terms of biological role, accelerates the degradation of transcripts by removing pyrophosphate from the 5'-end of triphosphorylated RNA, leading to a more labile monophosphorylated state that can stimulate subsequent ribonuclease cleavage. This is RNA pyrophosphohydrolase from Acidiphilium cryptum (strain JF-5).